The chain runs to 407 residues: Monooxygenase 2 (407 aa).

It belongs to the 3-hydroxybenzoate 6-hydroxylase family. As to quaternary structure, monomer. It depends on FAD as a cofactor. As to expression, expressed in seeds, seedlings, roots, leaves, flowers, pollen and siliques.

The sequence is that of Monooxygenase 2 from Arabidopsis thaliana (Mouse-ear cress).